The chain runs to 208 residues: Dephospho-CoA kinase (208 aa).

Positions 3–208 (EIGLTGGIGS…ALSAAGVTQA (206 aa)) constitute a DPCK domain. 11–16 (GSGKTR) provides a ligand contact to ATP.

The protein belongs to the CoaE family.

The protein localises to the cytoplasm. The catalysed reaction is 3'-dephospho-CoA + ATP = ADP + CoA + H(+). It participates in cofactor biosynthesis; coenzyme A biosynthesis; CoA from (R)-pantothenate: step 5/5. Its function is as follows. Catalyzes the phosphorylation of the 3'-hydroxyl group of dephosphocoenzyme A to form coenzyme A. The polypeptide is Dephospho-CoA kinase (Cupriavidus pinatubonensis (strain JMP 134 / LMG 1197) (Cupriavidus necator (strain JMP 134))).